We begin with the raw amino-acid sequence, 406 residues long: Tyrosine--tRNA ligase (406 aa).

Tyrosine 35 contributes to the L-tyrosine binding site. A 'HIGH' region motif is present at residues 40–49 (PTADSLHVGH). L-tyrosine-binding residues include tyrosine 168 and glutamine 172. The 'KMSKS' region motif lies at 228 to 232 (KMGKT). ATP is bound at residue lysine 231. Residues 340 to 404 (AELLDILVEA…RGKKNYNKIV (65 aa)) enclose the S4 RNA-binding domain.

The protein belongs to the class-I aminoacyl-tRNA synthetase family. TyrS type 1 subfamily. As to quaternary structure, homodimer.

The protein localises to the cytoplasm. The catalysed reaction is tRNA(Tyr) + L-tyrosine + ATP = L-tyrosyl-tRNA(Tyr) + AMP + diphosphate + H(+). Its function is as follows. Catalyzes the attachment of tyrosine to tRNA(Tyr) in a two-step reaction: tyrosine is first activated by ATP to form Tyr-AMP and then transferred to the acceptor end of tRNA(Tyr). The protein is Tyrosine--tRNA ligase of Clostridium perfringens (strain 13 / Type A).